The following is a 125-amino-acid chain: MAAAGLAQIPDVDIDSDGVFKYVLIRVHAAPPSEAPGGESKDIVRGYKWAEYHADIYDKVSGELQKKGHDCECLGGGRISHQSQDRKIHVYGYSMGYGRAQHSVSTEKIRAKYPDYEVTWADDGY.

The residue at position 2 (A2) is an N-acetylalanine. Position 21 (K21) interacts with substrate. The Proton acceptor role is filled by H53. A substrate-binding site is contributed by 94-96 (SMG).

Monomer.

Its subcellular location is the cytoplasm. It carries out the reaction N(pros)-phospho-L-histidyl-[protein] + H2O = L-histidyl-[protein] + phosphate. The catalysed reaction is N(tele)-phospho-L-histidyl-[protein] + H2O = L-histidyl-[protein] + phosphate. Functionally, exhibits phosphohistidine phosphatase activity. In terms of biological role, may have a significant involvement in neuronal signaling. This Oryctolagus cuniculus (Rabbit) protein is 14 kDa phosphohistidine phosphatase (PHPT1).